The sequence spans 314 residues: Dihydropteroate synthase (314 aa).

Positions 10-294 (TVICGIINVT…DVASHRMAVE (285 aa)) constitute a Pterin-binding domain. N17 is a binding site for Mg(2+). (7,8-dihydropterin-6-yl)methyl diphosphate contacts are provided by residues T57, D91, N110, D201, K237, and 282–284 (RVH).

Belongs to the DHPS family. As to quaternary structure, homodimer or homotrimer. Mg(2+) is required as a cofactor.

It catalyses the reaction (7,8-dihydropterin-6-yl)methyl diphosphate + 4-aminobenzoate = 7,8-dihydropteroate + diphosphate. The protein operates within cofactor biosynthesis; tetrahydrofolate biosynthesis; 7,8-dihydrofolate from 2-amino-4-hydroxy-6-hydroxymethyl-7,8-dihydropteridine diphosphate and 4-aminobenzoate: step 1/2. Catalyzes the condensation of para-aminobenzoate (pABA) with 6-hydroxymethyl-7,8-dihydropterin diphosphate (DHPt-PP) to form 7,8-dihydropteroate (H2Pte), the immediate precursor of folate derivatives. The sequence is that of Dihydropteroate synthase (sulA) from Streptococcus pneumoniae serotype 4 (strain ATCC BAA-334 / TIGR4).